Consider the following 278-residue polypeptide: Digeranylgeranylglyceryl phosphate synthase (278 aa).

8 helical membrane passes run Val15–Val35, Pro36–Ile56, Ile89–Ile109, Leu133–Gly153, Thr159–Ile179, Trp203–Phe223, Phe225–Leu245, and Ala258–Ile278.

It belongs to the UbiA prenyltransferase family. DGGGP synthase subfamily. Mg(2+) is required as a cofactor.

The protein localises to the cell membrane. The enzyme catalyses sn-3-O-(geranylgeranyl)glycerol 1-phosphate + (2E,6E,10E)-geranylgeranyl diphosphate = 2,3-bis-O-(geranylgeranyl)-sn-glycerol 1-phosphate + diphosphate. It participates in membrane lipid metabolism; glycerophospholipid metabolism. Its function is as follows. Prenyltransferase that catalyzes the transfer of the geranylgeranyl moiety of geranylgeranyl diphosphate (GGPP) to the C2 hydroxyl of (S)-3-O-geranylgeranylglyceryl phosphate (GGGP). This reaction is the second ether-bond-formation step in the biosynthesis of archaeal membrane lipids. The polypeptide is Digeranylgeranylglyceryl phosphate synthase (Sulfurisphaera tokodaii (strain DSM 16993 / JCM 10545 / NBRC 100140 / 7) (Sulfolobus tokodaii)).